Consider the following 430-residue polypeptide: Histidinol dehydrogenase (430 aa).

Residues tyrosine 130, glutamine 191, and asparagine 214 each coordinate NAD(+). Positions 237, 259, and 262 each coordinate substrate. Glutamine 259 and histidine 262 together coordinate Zn(2+). Catalysis depends on proton acceptor residues glutamate 327 and histidine 328. Substrate is bound by residues histidine 328, aspartate 361, glutamate 415, and histidine 420. Aspartate 361 contributes to the Zn(2+) binding site. Position 420 (histidine 420) interacts with Zn(2+).

This sequence belongs to the histidinol dehydrogenase family. It depends on Zn(2+) as a cofactor.

The catalysed reaction is L-histidinol + 2 NAD(+) + H2O = L-histidine + 2 NADH + 3 H(+). The protein operates within amino-acid biosynthesis; L-histidine biosynthesis; L-histidine from 5-phospho-alpha-D-ribose 1-diphosphate: step 9/9. Catalyzes the sequential NAD-dependent oxidations of L-histidinol to L-histidinaldehyde and then to L-histidine. The polypeptide is Histidinol dehydrogenase (Brucella abortus (strain 2308)).